The primary structure comprises 406 residues: Tubby-like F-box protein 3 (406 aa).

Positions 50 to 105 constitute an F-box domain; sequence SCWASMPPELLRDVLMRIEQSEDTWPSRKNVVSCAGVCRNWREIVKEIVRVPELSS.

Belongs to the TUB family. As to expression, ubiquitous at low levels. Not detected in mature siliques.

The protein localises to the cell membrane. It localises to the plastid. The protein resides in the nucleus. Its subcellular location is the nucleoplasm. It is found in the cytoplasm. Involved in abiotic stress signaling. Tethered to plasma membrane (PM) and probably bound to phosphatidylinositol 4,5-bisphosphate. Abiotic stresses (drought, salt, H(2)O(2)) trigger phospholipase C mediated PM dislogement and plastidial and nucleocytosolic relocation of TULP3. The polypeptide is Tubby-like F-box protein 3 (Arabidopsis thaliana (Mouse-ear cress)).